Reading from the N-terminus, the 456-residue chain is Putative F-box/LRR-repeat protein At3g18150 (456 aa).

Residues Val30–Tyr78 enclose the F-box domain. LRR repeat units follow at residues Thr177–His202, Cys203–Lys213, Val228–Cys253, Lys278–Gly303, Ile333–Thr358, and Cys396–Val422.

In Arabidopsis thaliana (Mouse-ear cress), this protein is Putative F-box/LRR-repeat protein At3g18150.